The chain runs to 591 residues: MEGKWLLCLLLVLGTAAIQAHDGHDDDMIDIEDDLDDVIEEVEDSKSKSDTSTPPSPKVTYKAPVPTGEVYFADSFDRGSLSGWILSKAKKDDTDDEIAKYDGKWEVDEMKETKLPGDKGLVLMSRAKHHAISAKLNKPFLFDTKPLIVQYEVNFQNGIECGGAYVKLLSKTSELNLDQFHDKTPYTIMFGPDKCGEDYKLHFIFRHKNPKTGVYEEKHAKRPDADLKTYFTDKKTHLYTLILNPDNSFEILVDQSVVNSGNLLNDMTPPVNPSREIEDPEDRKPEDWDERPKIADPDAVKPDDWDEDAPSKIPDEEATKPEGWLDDEPEYIPDPDAEKPEDWDEDMDGEWEAPQIANPKCESAPGCGVWQRPMIDNPNYKGKWKPPMIDNPNYQGIWKPRKIPNPDFFEDLEPFRMTPFSAIGLELWSMTSDIFFDNFIISGDRRVVDDWANDGWGLKKAADGAAEPGVVGQMLEAAEERPWLWVVYILTVALPVFLVILFCCSGKKQSNAMEYKKTDAPQPDVKDEEGKEEEKNKGDEEEEEEKLEEKQKSDAEEDGGTGSQDEEDSKPKAEEDEILNRSPRNRKPRRE.

Positions 1–20 (MEGKWLLCLLLVLGTAAIQA) are cleaved as a signal peptide. The Lumenal portion of the chain corresponds to 21 to 482 (HDGHDDDMID…QMLEAAEERP (462 aa)). Positions 75 and 118 each coordinate Ca(2+). At K138 the chain carries N6-acetyllysine. Residues C161 and C195 are joined by a disulfide bond. Y165, K167, Y186, and D193 together coordinate an alpha-D-glucoside. Residues 261 to 347 (GNLLNDMTPP…EKPEDWDEDM (87 aa)) form a disordered region. A compositionally biased stretch (basic and acidic residues) spans 275–320 (REIEDPEDRKPEDWDERPKIADPDAVKPDDWDEDAPSKIPDEEATK). Positions 277–410 (IEDPEDRKPE…RKIPNPDFFE (134 aa)) are p domain (Extended arm). A run of 5 repeats spans residues 279–291 (DPEDRKPEDWDER), 296–308 (DPDAVKPDDWDED), 315–327 (DEEATKPEGWLDD), 334–346 (DPDAEKPEDWDED), and 349–359 (GEWEAPQIANP). 2 4 X approximate repeats regions span residues 279-346 (DPED…WDED) and 349-406 (GEWE…IPNP). A compositionally biased stretch (acidic residues) spans 324-347 (WLDDEPEYIPDPDAEKPEDWDEDM). An interaction with PPIB region spans residues 327–360 (DEPEYIPDPDAEKPEDWDEDMDGEWEAPQIANPK). A disulfide bridge connects residues C361 and C367. Tandem repeats lie at residues 368-378 (GVWQRPMIDNP), 382-392 (GKWKPPMIDNP), and 396-406 (GIWKPRKIPNP). An alpha-D-glucoside is bound at residue E426. A Ca(2+)-binding site is contributed by D437. The helical transmembrane segment at 483 to 503 (WLWVVYILTVALPVFLVILFC) threads the bilayer. Residues C503 and C504 are each lipidated (S-palmitoyl cysteine). Over 504–591 (CSGKKQSNAM…SPRNRKPRRE (88 aa)) the chain is Cytoplasmic. The sufficient to mediate interaction with SGIP1 stretch occupies residues 504–591 (CSGKKQSNAM…SPRNRKPRRE (88 aa)). The span at 514 to 538 (EYKKTDAPQPDVKDEEGKEEEKNKG) shows a compositional bias: basic and acidic residues. Residues 514 to 591 (EYKKTDAPQP…SPRNRKPRRE (78 aa)) are disordered. S553 bears the Phosphoserine mark. Over residues 555–568 (AEEDGGTGSQDEED) the composition is skewed to acidic residues. T561 carries the post-translational modification Phosphothreonine. Position 563 is a phosphoserine; by MAPK3 (S563). S582 carries the post-translational modification Phosphoserine.

It belongs to the calreticulin family. As to quaternary structure, interacts with MAPK3/ERK1. Interacts with KCNH2. Associates with ribosomes. Interacts with SGIP1; involved in negative regulation of endocytosis. The palmitoylated form interacts with the ribosome-translocon complex component SSR1, promoting efficient folding of glycoproteins. Interacts with SERPINA2P/SERPINA2 and with the S and Z variants of SERPINA1. Interacts with PPIB. Interacts with ZNRF4. Interacts with SMIM22. Interacts with TMX2. Interacts with TMEM35A/NACHO and CHRNA7. Interacts with reticulophagy regulators RETREG2 and RETREG3. Interacts with DNM1L; may form part of a larger protein complex at the ER-mitochondrial interface during mitochondrial fission. Interacts with ADAM7. Post-translationally, phosphorylated at Ser-563 by MAPK3/ERK1. Phosphorylation by MAPK3/ERK1 increases its association with ribosomes. In terms of processing, palmitoylation by DHHC6 leads to the preferential localization to the perinuclear rough ER. It mediates the association of calnexin with the ribosome-translocon complex (RTC) which is required for efficient folding of glycosylated proteins. Ubiquitinated, leading to proteasomal degradation. Probably ubiquitinated by ZNRF4.

The protein localises to the endoplasmic reticulum membrane. It localises to the mitochondrion membrane. The protein resides in the melanosome membrane. Calcium-binding protein that interacts with newly synthesized monoglucosylated glycoproteins in the endoplasmic reticulum. It may act in assisting protein assembly and/or in the retention within the ER of unassembled protein subunits. It seems to play a major role in the quality control apparatus of the ER by the retention of incorrectly folded proteins. Associated with partial T-cell antigen receptor complexes that escape the ER of immature thymocytes, it may function as a signaling complex regulating thymocyte maturation. Additionally it may play a role in receptor-mediated endocytosis at the synapse. This chain is Calnexin (Canx), found in Rattus norvegicus (Rat).